Consider the following 471-residue polypeptide: Tetratricopeptide repeat protein 29 (471 aa).

TPR repeat units follow at residues 92 to 131, 136 to 173, 182 to 215, 234 to 267, 274 to 307, 314 to 347, and 354 to 387; these read DKLPEAAKAQSLFWQQRPLEDQPDKLDNFYHYLTRAEAAE, YEEVYNNLYALACYFDNSEDKWVRNHFYERCFNIAQLI, AEAESHMGLLFEEEGELLKAAEHYEAFHELTHGR, VRTYRLLSDRMLENKDYKQAIKILIKASEIAREG, GEASYYLGLAHLASGEYETALTVLNRYSEISTSL, GRAYEAIAKALQSQGETTEAINYLEKFVTIARNN, and IRACTMLGDIYNEKGQYSKASEYFQQAFSTAMEL. Residues 449–471 form a disordered region; the sequence is ATEDNIYQLPDAEEETRRSPENQ.

As to expression, expressed in spermatozoa (at protein level).

Its subcellular location is the cytoplasm. The protein resides in the cytoskeleton. The protein localises to the flagellum axoneme. Axonemal protein which is implicated in axonemal and/or peri-axonemal structure assembly and regulates flagellum assembly and beating and therefore sperm motility. The polypeptide is Tetratricopeptide repeat protein 29 (Ttc29) (Mus musculus (Mouse)).